The following is a 53-amino-acid chain: UPF0391 membrane protein BP1737 (53 aa).

Transmembrane regions (helical) follow at residues 5-25 (AVVFFVIAIIAAVLGFGGIAA) and 30-50 (IAKILFFVFLVLALLSILGGV).

Belongs to the UPF0391 family.

The protein resides in the cell membrane. The protein is UPF0391 membrane protein BP1737 of Bordetella pertussis (strain Tohama I / ATCC BAA-589 / NCTC 13251).